Consider the following 116-residue polypeptide: Protein Rev (116 aa).

Ser5 and Ser8 each carry phosphoserine; by host CK2. Residues 18 to 26 (IIKHLYQSN) form a homomultimerization region. The segment at 20–48 (KHLYQSNPPPKPEGTRQARRNRRRRWRER) is disordered. Residues 34–50 (TRQARRNRRRRWRERQR) carry the Nuclear localization signal and RNA-binding (RRE) motif. A compositionally biased stretch (basic residues) spans 36–48 (QARRNRRRRWRER). A Nuclear export signal and binding to XPO1 motif is present at residues 73–84 (LQLPPLERLTLD). Positions 91-116 (TSGTQGVGSPQILVESPAVLESGTKE) are disordered. Ser92 and Ser99 each carry phosphoserine; by host.

It belongs to the HIV-1 REV protein family. Homomultimer; when bound to the RRE. Multimeric assembly is essential for activity and may involve XPO1. Binds to human KPNB1, XPO1, TNPO1, RANBP5 and IPO7. Interacts with the viral Integrase. Interacts with human KHDRBS1. Interacts with human NAP1; this interaction decreases Rev multimerization and stimulates its activity. Interacts with human DEAD-box helicases DDX3 and DDX24; these interactions may serve for viral RNA export to the cytoplasm and packaging, respectively. Interacts with human PSIP1; this interaction may inhibit HIV-1 DNA integration by promoting dissociation of the Integrase-LEDGF/p75 complex. Asymmetrically arginine dimethylated at one site by host PRMT6. Methylation impairs the RNA-binding activity and export of viral RNA from the nucleus to the cytoplasm. Post-translationally, phosphorylated by protein kinase CK2. Presence of, and maybe binding to the N-terminus of the regulatory beta subunit of CK2 is necessary for CK2-mediated Rev's phosphorylation.

The protein resides in the host nucleus. The protein localises to the host nucleolus. It localises to the host cytoplasm. Its function is as follows. Escorts unspliced or incompletely spliced viral pre-mRNAs (late transcripts) out of the nucleus of infected cells. These pre-mRNAs carry a recognition sequence called Rev responsive element (RRE) located in the env gene, that is not present in fully spliced viral mRNAs (early transcripts). This function is essential since most viral proteins are translated from unspliced or partially spliced pre-mRNAs which cannot exit the nucleus by the pathway used by fully processed cellular mRNAs. Rev itself is translated from a fully spliced mRNA that readily exits the nucleus. Rev's nuclear localization signal (NLS) binds directly to KPNB1/Importin beta-1 without previous binding to KPNA1/Importin alpha-1. KPNB1 binds to the GDP bound form of RAN (Ran-GDP) and targets Rev to the nucleus. In the nucleus, the conversion from Ran-GDP to Ran-GTP dissociates Rev from KPNB1 and allows Rev's binding to the RRE in viral pre-mRNAs. Rev multimerization on the RRE via cooperative assembly exposes its nuclear export signal (NES) to the surface. Rev can then form a complex with XPO1/CRM1 and Ran-GTP, leading to nuclear export of the complex. Conversion from Ran-GTP to Ran-GDP mediates dissociation of the Rev/RRE/XPO1/RAN complex, so that Rev can return to the nucleus for a subsequent round of export. Beside KPNB1, also seems to interact with TNPO1/Transportin-1, RANBP5/IPO5 and IPO7/RANBP7 for nuclear import. The nucleoporin-like HRB/RIP is an essential cofactor that probably indirectly interacts with Rev to release HIV RNAs from the perinuclear region to the cytoplasm. The protein is Protein Rev of Human immunodeficiency virus type 1 group M subtype B (isolate CDC-451) (HIV-1).